The following is a 349-amino-acid chain: UDP-3-O-acylglucosamine N-acyltransferase (349 aa).

Histidine 243 functions as the Proton acceptor in the catalytic mechanism.

It belongs to the transferase hexapeptide repeat family. LpxD subfamily. As to quaternary structure, homotrimer.

The catalysed reaction is a UDP-3-O-[(3R)-3-hydroxyacyl]-alpha-D-glucosamine + a (3R)-hydroxyacyl-[ACP] = a UDP-2-N,3-O-bis[(3R)-3-hydroxyacyl]-alpha-D-glucosamine + holo-[ACP] + H(+). Its pathway is bacterial outer membrane biogenesis; LPS lipid A biosynthesis. Catalyzes the N-acylation of UDP-3-O-acylglucosamine using 3-hydroxyacyl-ACP as the acyl donor. Is involved in the biosynthesis of lipid A, a phosphorylated glycolipid that anchors the lipopolysaccharide to the outer membrane of the cell. This is UDP-3-O-acylglucosamine N-acyltransferase from Myxococcus xanthus (strain DK1622).